We begin with the raw amino-acid sequence, 83 residues long: MLTIRLALGGSKKRPFYHLTVTDSRNPRDGSHKEQVGFFNPVARGQEVRLSVNQERVAYWLSVGAQPSERVAKLLKDSAKAAA.

This sequence belongs to the bacterial ribosomal protein bS16 family.

In Pseudomonas fluorescens (strain SBW25), this protein is Small ribosomal subunit protein bS16.